A 506-amino-acid polypeptide reads, in one-letter code: Deoxyguanosinetriphosphate triphosphohydrolase (506 aa).

In terms of domain architecture, HD spans 66 to 274 (RLTHSLEVQQ…MEAADDISYC (209 aa)).

It belongs to the dGTPase family. Type 1 subfamily. As to quaternary structure, homotetramer. Mg(2+) serves as cofactor.

The catalysed reaction is dGTP + H2O = 2'-deoxyguanosine + triphosphate + H(+). In terms of biological role, dGTPase preferentially hydrolyzes dGTP over the other canonical NTPs. The chain is Deoxyguanosinetriphosphate triphosphohydrolase from Yersinia pseudotuberculosis serotype O:3 (strain YPIII).